Here is a 336-residue protein sequence, read N- to C-terminus: UDP-3-O-acylglucosamine N-acyltransferase (336 aa).

His233 acts as the Proton acceptor in catalysis.

This sequence belongs to the transferase hexapeptide repeat family. LpxD subfamily. In terms of assembly, homotrimer.

It carries out the reaction a UDP-3-O-[(3R)-3-hydroxyacyl]-alpha-D-glucosamine + a (3R)-hydroxyacyl-[ACP] = a UDP-2-N,3-O-bis[(3R)-3-hydroxyacyl]-alpha-D-glucosamine + holo-[ACP] + H(+). Its pathway is bacterial outer membrane biogenesis; LPS lipid A biosynthesis. Functionally, catalyzes the N-acylation of UDP-3-O-acylglucosamine using 3-hydroxyacyl-ACP as the acyl donor. Is involved in the biosynthesis of lipid A, a phosphorylated glycolipid that anchors the lipopolysaccharide to the outer membrane of the cell. The protein is UDP-3-O-acylglucosamine N-acyltransferase of Helicobacter pylori (strain HPAG1).